Here is a 313-residue protein sequence, read N- to C-terminus: Carbamate kinase 2 (313 aa).

Belongs to the carbamate kinase family.

It is found in the cytoplasm. It carries out the reaction hydrogencarbonate + NH4(+) + ATP = carbamoyl phosphate + ADP + H2O + H(+). It participates in metabolic intermediate metabolism; carbamoyl phosphate degradation; CO(2) and NH(3) from carbamoyl phosphate: step 1/1. The chain is Carbamate kinase 2 (arcC2) from Staphylococcus aureus (strain bovine RF122 / ET3-1).